An 87-amino-acid polypeptide reads, in one-letter code: Small ribosomal subunit protein bS20 (87 aa).

The disordered stretch occupies residues 1 to 26 (MANIKSAKKRAIQSEKRRKHNASRRS).

Belongs to the bacterial ribosomal protein bS20 family.

In terms of biological role, binds directly to 16S ribosomal RNA. This is Small ribosomal subunit protein bS20 from Photorhabdus laumondii subsp. laumondii (strain DSM 15139 / CIP 105565 / TT01) (Photorhabdus luminescens subsp. laumondii).